The sequence spans 278 residues: Tryptophan synthase alpha chain (278 aa).

Residues glutamate 49 and aspartate 60 each act as proton acceptor in the active site.

It belongs to the TrpA family. Tetramer of two alpha and two beta chains.

It catalyses the reaction (1S,2R)-1-C-(indol-3-yl)glycerol 3-phosphate + L-serine = D-glyceraldehyde 3-phosphate + L-tryptophan + H2O. The protein operates within amino-acid biosynthesis; L-tryptophan biosynthesis; L-tryptophan from chorismate: step 5/5. The alpha subunit is responsible for the aldol cleavage of indoleglycerol phosphate to indole and glyceraldehyde 3-phosphate. The chain is Tryptophan synthase alpha chain from Psychrobacter arcticus (strain DSM 17307 / VKM B-2377 / 273-4).